Consider the following 327-residue polypeptide: Spermidine/putrescine import ATP-binding protein PotA (327 aa).

Residues 5-235 (IKVEAVEKHF…PKTLFVATFI (231 aa)) enclose the ABC transporter domain. Residue 37-44 (GPSGCGKT) participates in ATP binding.

It belongs to the ABC transporter superfamily. Spermidine/putrescine importer (TC 3.A.1.11.1) family. As to quaternary structure, the complex is composed of two ATP-binding proteins (PotA), two transmembrane proteins (PotB and PotC) and a solute-binding protein (PotD).

The protein resides in the cell membrane. It carries out the reaction ATP + H2O + polyamine-[polyamine-binding protein]Side 1 = ADP + phosphate + polyamineSide 2 + [polyamine-binding protein]Side 1.. Functionally, part of the ABC transporter complex PotABCD involved in spermidine/putrescine import. Responsible for energy coupling to the transport system. The polypeptide is Spermidine/putrescine import ATP-binding protein PotA (Bacillus cereus (strain ATCC 14579 / DSM 31 / CCUG 7414 / JCM 2152 / NBRC 15305 / NCIMB 9373 / NCTC 2599 / NRRL B-3711)).